Reading from the N-terminus, the 363-residue chain is 3-dehydroquinate synthase (363 aa).

Residues 107-111 (GVIGD), 131-132 (TT), Lys-144, and Lys-153 each bind NAD(+). Positions 186, 251, and 268 each coordinate Zn(2+).

Belongs to the sugar phosphate cyclases superfamily. Dehydroquinate synthase family. NAD(+) serves as cofactor. Co(2+) is required as a cofactor. Requires Zn(2+) as cofactor.

Its subcellular location is the cytoplasm. The enzyme catalyses 7-phospho-2-dehydro-3-deoxy-D-arabino-heptonate = 3-dehydroquinate + phosphate. Its pathway is metabolic intermediate biosynthesis; chorismate biosynthesis; chorismate from D-erythrose 4-phosphate and phosphoenolpyruvate: step 2/7. Functionally, catalyzes the conversion of 3-deoxy-D-arabino-heptulosonate 7-phosphate (DAHP) to dehydroquinate (DHQ). This chain is 3-dehydroquinate synthase, found in Nostoc sp. (strain PCC 7120 / SAG 25.82 / UTEX 2576).